The sequence spans 184 residues: Peptidyl-tRNA hydrolase (184 aa).

A tRNA-binding site is contributed by tyrosine 14. The Proton acceptor role is filled by histidine 19. Positions 64, 66, and 112 each coordinate tRNA.

It belongs to the PTH family. Monomer.

The protein resides in the cytoplasm. The catalysed reaction is an N-acyl-L-alpha-aminoacyl-tRNA + H2O = an N-acyl-L-amino acid + a tRNA + H(+). Hydrolyzes ribosome-free peptidyl-tRNAs (with 1 or more amino acids incorporated), which drop off the ribosome during protein synthesis, or as a result of ribosome stalling. Its function is as follows. Catalyzes the release of premature peptidyl moieties from peptidyl-tRNA molecules trapped in stalled 50S ribosomal subunits, and thus maintains levels of free tRNAs and 50S ribosomes. This chain is Peptidyl-tRNA hydrolase, found in Thermoanaerobacter sp. (strain X514).